The following is a 39-amino-acid chain: Contryphan-Cal3 (39 aa).

Residues 1–20 form the signal peptide; it reads MTRTAVLLLTLLFLVAMAAS. A disulfide bond links Cys-29 and Cys-35.

Expressed by the venom duct.

It localises to the secreted. Probable neurotoxin. The polypeptide is Contryphan-Cal3 (Californiconus californicus (California cone)).